A 447-amino-acid polypeptide reads, in one-letter code: Glutamine synthetase (447 aa).

Residues 20 to 105 (RDVKFIRTQF…ILGDVYLPDG (86 aa)) enclose the GS beta-grasp domain. Residues 112–447 (PRYVLKTAIK…WELSRYLSML (336 aa)) enclose the GS catalytic domain. 2 residues coordinate Mg(2+): Glu-135 and Glu-137. An ATP-binding site is contributed by Glu-187. Mg(2+) contacts are provided by Glu-192 and Glu-199. L-glutamate-binding positions include 243–244 (NG) and Gly-244. Residue His-248 participates in Mg(2+) binding. ATP is bound at residue Ser-252. 3 residues coordinate L-glutamate: Arg-301, Glu-307, and Arg-319. Arg-319 and Arg-324 together coordinate ATP. Glu-336 serves as a coordination point for Mg(2+). Arg-338 lines the L-glutamate pocket.

This sequence belongs to the glutamine synthetase family. As to quaternary structure, homohexamer. Interacts and forms stable complexes with the regulatory protein GlnK1. It depends on Mg(2+) as a cofactor.

Its subcellular location is the cytoplasm. The enzyme catalyses L-glutamate + NH4(+) + ATP = L-glutamine + ADP + phosphate + H(+). Directly stimulated by the effector molecule 2-oxoglutarate. Inhibited by GlnK1. 2-oxoglutarate antagonizes the inhibitory effects of GlnK1, but does not prevent GlnK1/GlnA1 complex formation. Functionally, probably involved in nitrogen metabolism via ammonium assimilation. Catalyzes the ATP-dependent biosynthesis of glutamine from glutamate and ammonia. This is Glutamine synthetase from Methanosarcina mazei (strain ATCC BAA-159 / DSM 3647 / Goe1 / Go1 / JCM 11833 / OCM 88) (Methanosarcina frisia).